The primary structure comprises 25 residues: Xenoposin precursor fragment R2 (25 aa).

In terms of tissue distribution, expressed by the skin glands.

The protein localises to the secreted. In terms of biological role, antimicrobial peptide. The sequence is that of Xenoposin precursor fragment R2 from Xenopus ruwenzoriensis (Uganda clawed frog).